A 588-amino-acid chain; its full sequence is UDP-N-acetylmuramate--L-alanine ligase (588 aa).

Residue 119–125 (GSHGKST) participates in ATP binding. Low complexity predominate over residues 344–371 (VPAAAGAAAAPPVRRDPATAAAAATTAP). The disordered stretch occupies residues 344–411 (VPAAAGAAAA…APAAGPDHAA (68 aa)). Over residues 372–381 (IGPPDSPPPT) the composition is skewed to pro residues. Over residues 382–411 (GIALPRAAPPAVDAPVAATPAPAAGPDHAA) the composition is skewed to low complexity.

This sequence belongs to the MurCDEF family.

The protein resides in the cytoplasm. The catalysed reaction is UDP-N-acetyl-alpha-D-muramate + L-alanine + ATP = UDP-N-acetyl-alpha-D-muramoyl-L-alanine + ADP + phosphate + H(+). Its pathway is cell wall biogenesis; peptidoglycan biosynthesis. Its function is as follows. Cell wall formation. The protein is UDP-N-acetylmuramate--L-alanine ligase of Frankia alni (strain DSM 45986 / CECT 9034 / ACN14a).